The chain runs to 320 residues: Acetyl-coenzyme A carboxylase carboxyl transferase subunit alpha (320 aa).

In terms of domain architecture, CoA carboxyltransferase C-terminal spans 34–288 (RLEEALEAAR…GEALERVLAG (255 aa)).

It belongs to the AccA family. As to quaternary structure, acetyl-CoA carboxylase is a heterohexamer composed of biotin carboxyl carrier protein (AccB), biotin carboxylase (AccC) and two subunits each of ACCase subunit alpha (AccA) and ACCase subunit beta (AccD).

It is found in the cytoplasm. The catalysed reaction is N(6)-carboxybiotinyl-L-lysyl-[protein] + acetyl-CoA = N(6)-biotinyl-L-lysyl-[protein] + malonyl-CoA. Its pathway is lipid metabolism; malonyl-CoA biosynthesis; malonyl-CoA from acetyl-CoA: step 1/1. Its function is as follows. Component of the acetyl coenzyme A carboxylase (ACC) complex. First, biotin carboxylase catalyzes the carboxylation of biotin on its carrier protein (BCCP) and then the CO(2) group is transferred by the carboxyltransferase to acetyl-CoA to form malonyl-CoA. The chain is Acetyl-coenzyme A carboxylase carboxyl transferase subunit alpha from Rubrobacter xylanophilus (strain DSM 9941 / JCM 11954 / NBRC 16129 / PRD-1).